A 979-amino-acid polypeptide reads, in one-letter code: UPF0182 protein MT0070 (979 aa).

A run of 7 helical transmembrane segments spans residues 19–41 (LVTA…DIYV), 63–85 (LAIV…LLAY), 114–136 (LFGW…FDWV), 174–196 (WLFV…FGGL), 208–230 (AARV…AYWL), 261–280 (LVLV…AIFL), and 285–307 (IPAM…WPLL). Residues 894–948 (VFGPGTGRVATXPGGDAASAPPPGAGGPAPPQGVPPPRTTQPPAAPPRGPDVPPA) form a disordered region. Residues 913–946 (APPPGAGGPAPPQGVPPPRTTQPPAAPPRGPDVP) show a composition bias toward pro residues.

It belongs to the UPF0182 family.

The protein localises to the cell membrane. The polypeptide is UPF0182 protein MT0070 (Mycobacterium tuberculosis (strain CDC 1551 / Oshkosh)).